The chain runs to 1342 residues: DNA-directed RNA polymerase subunit beta (1342 aa).

Belongs to the RNA polymerase beta chain family. In terms of assembly, the RNAP catalytic core consists of 2 alpha, 1 beta, 1 beta' and 1 omega subunit. When a sigma factor is associated with the core the holoenzyme is formed, which can initiate transcription.

It carries out the reaction RNA(n) + a ribonucleoside 5'-triphosphate = RNA(n+1) + diphosphate. Its function is as follows. DNA-dependent RNA polymerase catalyzes the transcription of DNA into RNA using the four ribonucleoside triphosphates as substrates. This is DNA-directed RNA polymerase subunit beta from Enterobacter sp. (strain 638).